A 911-amino-acid chain; its full sequence is Nitrate reductase [NADH], clone PBNBR1412 (911 aa).

The interval 53–72 (NDAVDDSYDSSDDEDESHNR) is disordered. Positions 56–68 (VDDSYDSSDDEDE) are enriched in acidic residues. C191 lines the Mo-molybdopterin pocket. Residues 539–614 (AKMYSMSEVR…LEDYRIGELI (76 aa)) form the Cytochrome b5 heme-binding domain. Residues H574 and H597 each contribute to the heme site. The region spanning 654 to 766 (REKVPVTLIE…KGPLGHIEYL (113 aa)) is the FAD-binding FR-type domain. FAD contacts are provided by residues 706 to 709 (RAYT), 723 to 727 (VVKVY), F728, F735, 740 to 742 (LMS), and T793.

It belongs to the nitrate reductase family. Homodimer. FAD is required as a cofactor. The cofactor is heme. Requires Mo-molybdopterin as cofactor.

The enzyme catalyses nitrite + NAD(+) + H2O = nitrate + NADH + H(+). Functionally, nitrate reductase is a key enzyme involved in the first step of nitrate assimilation in plants, fungi and bacteria. The protein is Nitrate reductase [NADH], clone PBNBR1412 (NIA2) of Brassica napus (Rape).